The chain runs to 95 residues: Defensin-like protein 232 (95 aa).

An N-terminal signal peptide occupies residues 1 to 26 (MRCTTLIMVSFVVSCLLLSLVEESEA). 4 cysteine pairs are disulfide-bonded: C33-C94, C43-C68, C51-C84, and C66-C86.

It belongs to the DEFL family. In terms of tissue distribution, flower buds.

Its subcellular location is the secreted. This chain is Defensin-like protein 232 (SCRL23), found in Arabidopsis thaliana (Mouse-ear cress).